The primary structure comprises 140 residues: Lysozyme c-1 (140 aa).

Positions methionine 1–alanine 20 are cleaved as a signal peptide. The 120-residue stretch at lysine 21–phenylalanine 140 folds into the C-type lysozyme domain. Intrachain disulfides connect cysteine 26–cysteine 139, cysteine 47–cysteine 128, cysteine 81–cysteine 94, and cysteine 90–cysteine 108. Catalysis depends on residues glutamate 52 and aspartate 69.

This sequence belongs to the glycosyl hydrolase 22 family. Expressed in salivary glands and Malpighian tubules.

It carries out the reaction Hydrolysis of (1-&gt;4)-beta-linkages between N-acetylmuramic acid and N-acetyl-D-glucosamine residues in a peptidoglycan and between N-acetyl-D-glucosamine residues in chitodextrins.. In terms of biological role, lysozymes have primarily a bacteriolytic function; those in tissues and body fluids are associated with the monocyte-macrophage system and enhance the activity of immunoagents. This chain is Lysozyme c-1, found in Anopheles gambiae (African malaria mosquito).